The primary structure comprises 734 residues: DNA ligase (734 aa).

Residues 42–46 (DAEYD), 91–92 (SL), and Glu125 each bind NAD(+). Residue Lys127 is the N6-AMP-lysine intermediate of the active site. Positions 148, 185, 301, and 325 each coordinate NAD(+). Cys430, Cys433, Cys454, and Cys460 together coordinate Zn(2+). The 80-residue stretch at 655–734 (SADSEVAGKT…DTWLQRVGKA (80 aa)) folds into the BRCT domain.

It belongs to the NAD-dependent DNA ligase family. LigA subfamily. Mg(2+) is required as a cofactor. The cofactor is Mn(2+).

It catalyses the reaction NAD(+) + (deoxyribonucleotide)n-3'-hydroxyl + 5'-phospho-(deoxyribonucleotide)m = (deoxyribonucleotide)n+m + AMP + beta-nicotinamide D-nucleotide.. In terms of biological role, DNA ligase that catalyzes the formation of phosphodiester linkages between 5'-phosphoryl and 3'-hydroxyl groups in double-stranded DNA using NAD as a coenzyme and as the energy source for the reaction. It is essential for DNA replication and repair of damaged DNA. The protein is DNA ligase of Mesorhizobium japonicum (strain LMG 29417 / CECT 9101 / MAFF 303099) (Mesorhizobium loti (strain MAFF 303099)).